Reading from the N-terminus, the 208-residue chain is Small ribosomal subunit protein eS8 (208 aa).

A disordered region spans residues 1–40 (MGISRDNWHKRRKTGGKRKPVHKKRKYELGRPPSNTKLGP). Positions 8–26 (WHKRRKTGGKRKPVHKKRK) are enriched in basic residues.

Belongs to the eukaryotic ribosomal protein eS8 family. As to quaternary structure, component of the small ribosomal subunit.

The protein resides in the cytoplasm. In terms of biological role, component of the small ribosomal subunit. The ribosome is a large ribonucleoprotein complex responsible for the synthesis of proteins in the cell. The chain is Small ribosomal subunit protein eS8 (rps8) from Ictalurus punctatus (Channel catfish).